Consider the following 270-residue polypeptide: Phosphatidylglycerol--prolipoprotein diacylglyceryl transferase (270 aa).

4 helical membrane-spanning segments follow: residues 19–39 (FPVY…LWLA), 56–76 (LVLI…VIFE), 92–112 (QGGL…ILFA), and 116–136 (GVSF…GQAI). Arg-138 is an a 1,2-diacyl-sn-glycero-3-phospho-(1'-sn-glycerol) binding site. 3 helical membrane passes run 178 to 198 (HPTF…LLAL), 206 to 226 (GELF…VEGL), and 236 to 256 (LRIA…FIIV).

Belongs to the Lgt family.

It is found in the cell membrane. The catalysed reaction is L-cysteinyl-[prolipoprotein] + a 1,2-diacyl-sn-glycero-3-phospho-(1'-sn-glycerol) = an S-1,2-diacyl-sn-glyceryl-L-cysteinyl-[prolipoprotein] + sn-glycerol 1-phosphate + H(+). It functions in the pathway protein modification; lipoprotein biosynthesis (diacylglyceryl transfer). Catalyzes the transfer of the diacylglyceryl group from phosphatidylglycerol to the sulfhydryl group of the N-terminal cysteine of a prolipoprotein, the first step in the formation of mature lipoproteins. The protein is Phosphatidylglycerol--prolipoprotein diacylglyceryl transferase of Bacillus cereus (strain G9842).